A 477-amino-acid chain; its full sequence is Adenylyl cyclase-associated protein 2 (477 aa).

An N-acetylalanine modification is found at A2. 2 disordered regions span residues 225-261 and 274-321; these read LSSG…PSRS and TKGL…SQKH. Residues 230 to 246 are compositionally biased toward pro residues; it reads GLPPPPPPLPPPGPPPL. Positions 298 to 320 are enriched in low complexity; the sequence is QTQSPTKSHTPSPTSPKSYPSQK. Phosphoserine is present on residues S301 and S309. A C-CAP/cofactor C-like domain is found at 317-455; sequence PSQKHAPVLE…QDGDYREFPI (139 aa).

Belongs to the CAP family.

Its subcellular location is the cell membrane. In terms of biological role, involved in the regulation of actin polymerization. The chain is Adenylyl cyclase-associated protein 2 (CAP2) from Homo sapiens (Human).